A 386-amino-acid polypeptide reads, in one-letter code: 17-hydroxy-3-oxo-4-pregnene-20-carboxyl-CoA lyase (386 aa).

Catalysis depends on Tyr292, which acts as the Proton acceptor. The active-site Proton donor is Tyr342.

The protein belongs to the thiolase-like superfamily. In terms of assembly, homodimer. Interacts with the ChsH1/ChsH2 hydratase via the DUF35 C-terminal region of ChsH2 (ChsH2-DUF35). The ChsH1-ChsH2-Ltp2 protein complex is composed of two protomers that form a heterohexameric structure through the Ltp2 dimerization interface.

The enzyme catalyses 17-hydroxy-3-oxochol-4-en-22-oyl-CoA = androst-4-ene-3,17-dione + propanoyl-CoA. It participates in steroid metabolism; cholesterol degradation. Functionally, involved in cholesterol side chain degradation. When associated with the ChsH1/ChsH2 hydratase, catalyzes the retroaldol cleavage of 17-hydroxy-3-oxo-4-pregnene-20-carboxyl-CoA (17-HOPC-CoA) produced by the hydratase, forming androst-4-ene-3,17-dione and propionyl-CoA. This chain is 17-hydroxy-3-oxo-4-pregnene-20-carboxyl-CoA lyase, found in Mycobacterium tuberculosis (strain ATCC 25618 / H37Rv).